A 429-amino-acid polypeptide reads, in one-letter code: Adenylosuccinate synthetase (429 aa).

GTP contacts are provided by residues 12–18 (GDEGKGK) and 40–42 (GHT). The active-site Proton acceptor is the D13. Positions 13 and 40 each coordinate Mg(2+). IMP-binding positions include 13–16 (DEGK), 38–41 (NAGH), T129, R143, Q223, T238, and R302. The Proton donor role is filled by H41. 298–304 (VVTGRKR) lines the substrate pocket. Residues R304, 330 to 332 (KLD), and 412 to 414 (STS) each bind GTP.

Belongs to the adenylosuccinate synthetase family. As to quaternary structure, homodimer. Requires Mg(2+) as cofactor.

The protein resides in the cytoplasm. It carries out the reaction IMP + L-aspartate + GTP = N(6)-(1,2-dicarboxyethyl)-AMP + GDP + phosphate + 2 H(+). The protein operates within purine metabolism; AMP biosynthesis via de novo pathway; AMP from IMP: step 1/2. Its function is as follows. Plays an important role in the de novo pathway of purine nucleotide biosynthesis. Catalyzes the first committed step in the biosynthesis of AMP from IMP. The polypeptide is Adenylosuccinate synthetase (Brucella abortus (strain 2308)).